The sequence spans 227 residues: ATP synthase F(0) complex subunit a (227 aa).

A run of 6 helical transmembrane segments spans residues 14–34, 69–89, 98–118, 139–159, 167–187, and 190–210; these read LLGH…FPSP, WALM…LGLL, QLSM…LTGL, IPAL…ALGV, AGHL…PILP, and SILT…VAMI.

This sequence belongs to the ATPase A chain family. As to quaternary structure, component of the ATP synthase complex composed at least of ATP5F1A/subunit alpha, ATP5F1B/subunit beta, ATP5MC1/subunit c (homooctomer), MT-ATP6/subunit a, MT-ATP8/subunit 8, ATP5ME/subunit e, ATP5MF/subunit f, ATP5MG/subunit g, ATP5MK/subunit k, ATP5MJ/subunit j, ATP5F1C/subunit gamma, ATP5F1D/subunit delta, ATP5F1E/subunit epsilon, ATP5PF/subunit F6, ATP5PB/subunit b, ATP5PD/subunit d, ATP5PO/subunit OSCP. ATP synthase complex consists of a soluble F(1) head domain (subunits alpha(3) and beta(3)) - the catalytic core - and a membrane F(0) domain - the membrane proton channel (subunits c, a, 8, e, f, g, k and j). These two domains are linked by a central stalk (subunits gamma, delta, and epsilon) rotating inside the F1 region and a stationary peripheral stalk (subunits F6, b, d, and OSCP). Interacts with DNAJC30; interaction is direct.

It is found in the mitochondrion inner membrane. It catalyses the reaction H(+)(in) = H(+)(out). Its function is as follows. Subunit a, of the mitochondrial membrane ATP synthase complex (F(1)F(0) ATP synthase or Complex V) that produces ATP from ADP in the presence of a proton gradient across the membrane which is generated by electron transport complexes of the respiratory chain. ATP synthase complex consist of a soluble F(1) head domain - the catalytic core - and a membrane F(1) domain - the membrane proton channel. These two domains are linked by a central stalk rotating inside the F(1) region and a stationary peripheral stalk. During catalysis, ATP synthesis in the catalytic domain of F(1) is coupled via a rotary mechanism of the central stalk subunits to proton translocation. With the subunit c (ATP5MC1), forms the proton-conducting channel in the F(0) domain, that contains two crucial half-channels (inlet and outlet) that facilitate proton movement from the mitochondrial intermembrane space (IMS) into the matrix. Protons are taken up via the inlet half-channel and released through the outlet half-channel, following a Grotthuss mechanism. The chain is ATP synthase F(0) complex subunit a from Anas platyrhynchos (Mallard).